The following is a 475-amino-acid chain: MGGTSLDPALAEIGKKNGLLVWRINKFVLEPVPEVDHGVFYIGDAYIALYQKYDGCWDVHFWLGKNASTDEIGVAAIKTVEIDDSLGGIPTQHREIQNYESPLFLSYFPDGIRYVSGGYESGYRHVDDQFKNWKPHLFHCKGKRNVRCTEVECEVNSLNLGDVFILDLGKDLYVWMPPESGRLERIKGMARAKNIADHERMGIPKVHILDDVEWDNDSTFWSYFGGVSSVRKVSKGKDDDDNYWKRLTEQITLWKVSDASGAAKVSMVSQGENIRKEQLDPKDAFILDAINGGIFVWIGHECTLEERSKALIWGQNYLKQHHLPRWTQVTRVLESAESTQFTQWFRDWVDEKKKNTFTPLLFQVSDESGLLHVEEIANFTQEDLDGDDVMILDALNSIYVWVGANANANEKKEALNTAKLYLEKDKLPRHKKTAIDTIFQGKEPPTFKKFFPSWDDNLFKNEVRSVQNMRRLLFH.

Residues 1–131 (MGGTSLDPAL…GYRHVDDQFK (131 aa)) are actin binding, actin severing, Ca-sensitive. Residues 1–239 (MGGTSLDPAL…VRKVSKGKDD (239 aa)) form a necessary for barbed end capping activity region. One copy of the Gelsolin-like 1 repeat lies at 27–105 (FVLEPVPEVD…IQNYESPLFL (79 aa)). The segment at 70-73 (DEIG) is actin-actin interfilament contact point. A required for synapse elimination during development region spans residues 106–147 (SYFPDGIRYVSGGYESGYRHVDDQFKNWKPHLFHCKGKRNVR). The segment at 133–227 (WKPHLFHCKG…STFWSYFGGV (95 aa)) is required for phosphatidylinositol 4,5-bisphosphate binding and regulation. Gelsolin-like repeat units follow at residues 148–208 (CTEV…KVHI), 275–341 (RKEQ…STQF), and 375–447 (EIAN…PPTF). An F- and G-actin binding, Ca-independent region spans residues 240-475 (DDNYWKRLTE…VQNMRRLLFH (236 aa)). An inhibitory for phosphatidylinositol 4,5-bisphosphate binding activity region spans residues 248–348 (TEQITLWKVS…TQFTQWFRDW (101 aa)).

The protein belongs to the villin/gelsolin family. Monomer. Binds to actin monomers and filaments. In terms of processing, cleavage by caspase ced-3 activates its actin-severing function and is required for the elimination of presynaptic components during development.

It is found in the cytoplasm. Its subcellular location is the cytoskeleton. Calcium-regulated, actin-modulating protein that binds to the plus (or barbed) ends of actin monomers or filaments, preventing monomer exchange (end-blocking or capping). Binds actin but does not nucleate actin polymerization, albeit slows down elongation by blocking the barbed ends. By promoting actin depolymerization, required for the elimination of presynaptic components downstream of the egl-1, ced-4 and ced-3 apoptotic pathway during larval development. The protein is Gelsolin-like protein 1 of Caenorhabditis elegans.